The chain runs to 98 residues: NADH-ubiquinone oxidoreductase chain 4L (98 aa).

Helical transmembrane passes span 1 to 21 (MPVV…GLLV), 29 to 49 (SLLC…VTVL), and 61 to 81 (IILL…LVMV).

The protein belongs to the complex I subunit 4L family. Core subunit of respiratory chain NADH dehydrogenase (Complex I) which is composed of 45 different subunits.

The protein resides in the mitochondrion inner membrane. The catalysed reaction is a ubiquinone + NADH + 5 H(+)(in) = a ubiquinol + NAD(+) + 4 H(+)(out). Its function is as follows. Core subunit of the mitochondrial membrane respiratory chain NADH dehydrogenase (Complex I) which catalyzes electron transfer from NADH through the respiratory chain, using ubiquinone as an electron acceptor. Part of the enzyme membrane arm which is embedded in the lipid bilayer and involved in proton translocation. In Ursus arctos (Brown bear), this protein is NADH-ubiquinone oxidoreductase chain 4L (MT-ND4L).